The following is a 430-amino-acid chain: Serine--tRNA ligase (430 aa).

Position 237–239 (Thr-237–Glu-239) interacts with L-serine. Arg-268–Glu-270 serves as a coordination point for ATP. Glu-291 lines the L-serine pocket. Glu-355–Ser-358 lines the ATP pocket. An L-serine-binding site is contributed by Ser-391.

Belongs to the class-II aminoacyl-tRNA synthetase family. Type-1 seryl-tRNA synthetase subfamily. Homodimer. The tRNA molecule binds across the dimer.

The protein resides in the cytoplasm. It catalyses the reaction tRNA(Ser) + L-serine + ATP = L-seryl-tRNA(Ser) + AMP + diphosphate + H(+). It carries out the reaction tRNA(Sec) + L-serine + ATP = L-seryl-tRNA(Sec) + AMP + diphosphate + H(+). It participates in aminoacyl-tRNA biosynthesis; selenocysteinyl-tRNA(Sec) biosynthesis; L-seryl-tRNA(Sec) from L-serine and tRNA(Sec): step 1/1. In terms of biological role, catalyzes the attachment of serine to tRNA(Ser). Is also able to aminoacylate tRNA(Sec) with serine, to form the misacylated tRNA L-seryl-tRNA(Sec), which will be further converted into selenocysteinyl-tRNA(Sec). The chain is Serine--tRNA ligase from Enterobacter sp. (strain 638).